Consider the following 134-residue polypeptide: Arsenate reductase (134 aa).

Catalysis depends on nucleophile residues cysteine 11, cysteine 83, and cysteine 90. 2 disulfides stabilise this stretch: cysteine 11–cysteine 83 and cysteine 83–cysteine 90.

This sequence belongs to the low molecular weight phosphotyrosine protein phosphatase family. Thioredoxin-coupled ArsC subfamily.

The protein resides in the cytoplasm. The catalysed reaction is arsenate + [thioredoxin]-dithiol + H(+) = arsenite + [thioredoxin]-disulfide + H2O. Functionally, catalyzes the reduction of arsenate [As(V)] to arsenite [As(III)]. This is Arsenate reductase from Bacillus cereus (strain AH187).